A 247-amino-acid chain; its full sequence is ATP synthase subunit a, chloroplastic (247 aa).

Transmembrane regions (helical) follow at residues 38-58 (QVLI…IIAV), 95-115 (VPFI…GALL), 134-154 (INTT…AGLS), 199-219 (LVVV…VMFL), and 220-240 (GLFT…AYIG).

This sequence belongs to the ATPase A chain family. In terms of assembly, F-type ATPases have 2 components, CF(1) - the catalytic core - and CF(0) - the membrane proton channel. CF(1) has five subunits: alpha(3), beta(3), gamma(1), delta(1), epsilon(1). CF(0) has four main subunits: a, b, b' and c.

Its subcellular location is the plastid. It is found in the chloroplast thylakoid membrane. Key component of the proton channel; it plays a direct role in the translocation of protons across the membrane. This is ATP synthase subunit a, chloroplastic from Sorghum bicolor (Sorghum).